We begin with the raw amino-acid sequence, 581 residues long: Proline--tRNA ligase (581 aa).

The protein belongs to the class-II aminoacyl-tRNA synthetase family. ProS type 1 subfamily. In terms of assembly, homodimer.

The protein resides in the cytoplasm. It catalyses the reaction tRNA(Pro) + L-proline + ATP = L-prolyl-tRNA(Pro) + AMP + diphosphate. Functionally, catalyzes the attachment of proline to tRNA(Pro) in a two-step reaction: proline is first activated by ATP to form Pro-AMP and then transferred to the acceptor end of tRNA(Pro). As ProRS can inadvertently accommodate and process non-cognate amino acids such as alanine and cysteine, to avoid such errors it has two additional distinct editing activities against alanine. One activity is designated as 'pretransfer' editing and involves the tRNA(Pro)-independent hydrolysis of activated Ala-AMP. The other activity is designated 'posttransfer' editing and involves deacylation of mischarged Ala-tRNA(Pro). The misacylated Cys-tRNA(Pro) is not edited by ProRS. This chain is Proline--tRNA ligase, found in Blochmanniella pennsylvanica (strain BPEN).